We begin with the raw amino-acid sequence, 318 residues long: MATYCDDLGPSSAPPGQAQATAHPPGYEPGDLGAVGGGPLLWVNAPALSPKSYASGPGPAPPYAAPSYGAPGPLLGAPGGLAGADLAWLSLSGQQELLRLVRPPYSYSALIAMAIQSAPLRKLTLSQIYQYVAGNFPFYKRSKAGWQNSIRHNLSLNDCFKKVPRDEDDPGKGNYWTLDPNCEKMFDNGNFRRKRKRRAEASAAVRSGARSVGGAEAPALEPPSAACLDLQASPSPSAPEAATCFSGFASAMSALAGGLGTFPGGLAGDFSFGRRPPTVATHAPQTLNPSPGFAPGHQTAAAGFRLSHLLYSREGTEV.

Residues 1-30 are disordered; it reads MATYCDDLGPSSAPPGQAQATAHPPGYEPG. The fork-head DNA-binding region spans 102-196; that stretch reads RPPYSYSALI…DNGNFRRKRK (95 aa).

The protein localises to the nucleus. Functionally, possible transcriptional activator. In Homo sapiens (Human), this protein is Forkhead box protein I2 (FOXI2).